Reading from the N-terminus, the 113-residue chain is Iron-sulfur cluster insertion protein ErpA (113 aa).

Positions 41, 105, and 107 each coordinate iron-sulfur cluster.

Belongs to the HesB/IscA family. As to quaternary structure, homodimer. It depends on iron-sulfur cluster as a cofactor.

In terms of biological role, required for insertion of 4Fe-4S clusters for at least IspG. This Aliivibrio fischeri (strain ATCC 700601 / ES114) (Vibrio fischeri) protein is Iron-sulfur cluster insertion protein ErpA.